We begin with the raw amino-acid sequence, 613 residues long: MSSIIQLLPDHVANQIAAGEVVQRPASVVKELLENAIDAGASDIKLICKEAGKVLIQVIDNGKGMSVTDARLCFERHATSKIRQAEDLFDLHTKGFRGEALASIAAIAHVEMKTKQDQEELGTHIIIEGSKFVSQDVAVLPKGTSFLVKNLFFNIPARRNFLKSDIVELRHIIDEFQRVALAHHNIHFTFYHNGSELFNLPQSNVRQRIVNIFSGKTNEKLVPIQENTDILSIQGFIGKPEFAKKSKGEQFFFVNDRFIKSGYLHHAIMNAYEGLLRDGAQPSYFLYLDVPPHTIDINIHPTKTEIKFDDEQALYAILRSATKHSLGQFNVAPVLDFERDFNLDTPYSYQNKEAETPTIQVDSNFNPFQEEKKQSNFSYKPKTEKQPHWESLYVGLDTKSIDLDEMSFESETVTSSLFSDSEVEKAPTTTYQIHKKYIVNPIKSGMLIIDQQRAHQRILYEQFLTNITIHQANSQQLLFPVTLYFSGNEMALIQEIKQSLESTGFVFEALNKDSIVISGLPVTVSESEASIVLEQLVSDLQQEVPDSSFSQMDSMAKSMAKSLAVKTGTYLTEEAQVNLVNNLFACKEATVSPFNKTTFITLSVEDLDKKFSI.

The protein belongs to the DNA mismatch repair MutL/HexB family.

Its function is as follows. This protein is involved in the repair of mismatches in DNA. It is required for dam-dependent methyl-directed DNA mismatch repair. May act as a 'molecular matchmaker', a protein that promotes the formation of a stable complex between two or more DNA-binding proteins in an ATP-dependent manner without itself being part of a final effector complex. The chain is DNA mismatch repair protein MutL from Flavobacterium psychrophilum (strain ATCC 49511 / DSM 21280 / CIP 103535 / JIP02/86).